Here is a 159-residue protein sequence, read N- to C-terminus: uncharacterized protein (159 aa).

Helical transmembrane passes span 22 to 42 (LFSSSLYHSAFDCSFGISFTI), 45 to 65 (PIEYIVLSKPCFFAITPLLTL), 80 to 100 (IWVSTVTSLPISHCLIVSLSL), and 104 to 124 (FPSLFYSALVLSCLSLLCLAF).

It is found in the membrane. This is an uncharacterized protein from Schizosaccharomyces pombe (strain 972 / ATCC 24843) (Fission yeast).